A 509-amino-acid chain; its full sequence is MAAAAGMMLLGLLQAGGSVLGQAMEKVTGGNLLSMLLIACAFTLSLVYLFRLAAGHLVQLPAGAKSPPYIFSPIPFLGHAIAFGKSPVEFLENAYEKYGPVFSFTMVGKTFTYLLGSDAAALLFNSKNEDLNAEDVYSRLTTPVFGKGVAYDVPNPVFLEQKKMLKSGLNIAHFKQHVSIIEKETKEYFQSWGESGEKNVFEALSELIILTASHCLHGKEIRSQLNEKVAQLYADLDGGFSHAAWLLPGWLPLPSFRRRDRAHREIKNIFYKAIQKRRQSQEKIDDILQTLLDATYKDGRPLTDDEVAGMLIGLLLAGQHTSSTTSAWMGFFLARDKTLQEKCYLEQKTVCGENLPPLTYDQLKDLNLLDRCIKETLRLRPPIMIMMRMARTPQTVAGYTIPPGHQVCVSPTVNQRLKDSWVERLDFNPDRYLQDNPASGEKFAYVPFGAGRHRCIGENFAYVQIKTIWSTMLRLYEFDLIDGYFPTVNYTTMIHTPENPVIRYKRRSK.

A helical membrane pass occupies residues 30 to 50 (GNLLSMLLIACAFTLSLVYLF). A heme-binding site is contributed by Cys-455.

This sequence belongs to the cytochrome P450 family. Heme serves as cofactor. In terms of processing, ubiquitinated by MARCHF6, leading to proteasomal degradation.

It is found in the endoplasmic reticulum membrane. Its subcellular location is the microsome membrane. It carries out the reaction a 14alpha-methyl steroid + 3 reduced [NADPH--hemoprotein reductase] + 3 O2 = a Delta(14) steroid + formate + 3 oxidized [NADPH--hemoprotein reductase] + 4 H2O + 4 H(+). It catalyses the reaction lanosterol + 3 reduced [NADPH--hemoprotein reductase] + 3 O2 = 4,4-dimethyl-5alpha-cholesta-8,14,24-trien-3beta-ol + formate + 3 oxidized [NADPH--hemoprotein reductase] + 4 H2O + 4 H(+). The enzyme catalyses 24,25-dihydrolanosterol + 3 reduced [NADPH--hemoprotein reductase] + 3 O2 = 4,4-dimethyl-8,14-cholestadien-3beta-ol + formate + 3 oxidized [NADPH--hemoprotein reductase] + 4 H2O + 4 H(+). The catalysed reaction is a 14alpha-methyl steroid + reduced [NADPH--hemoprotein reductase] + O2 = a 14alpha-hydroxymethyl steroid + oxidized [NADPH--hemoprotein reductase] + H2O + H(+). It carries out the reaction a 14alpha-hydroxymethyl steroid + reduced [NADPH--hemoprotein reductase] + O2 = a 14alpha-formyl steroid + oxidized [NADPH--hemoprotein reductase] + 2 H2O + H(+). It catalyses the reaction a 14alpha-formyl steroid + reduced [NADPH--hemoprotein reductase] + O2 = a Delta(14) steroid + formate + oxidized [NADPH--hemoprotein reductase] + H2O + 2 H(+). The enzyme catalyses lanosterol + reduced [NADPH--hemoprotein reductase] + O2 = 32-hydroxylanosterol + oxidized [NADPH--hemoprotein reductase] + H2O + H(+). The catalysed reaction is 32-hydroxylanosterol + reduced [NADPH--hemoprotein reductase] + O2 = 32-oxolanosterol + oxidized [NADPH--hemoprotein reductase] + 2 H2O + H(+). It carries out the reaction 32-oxolanosterol + reduced [NADPH--hemoprotein reductase] + O2 = 4,4-dimethyl-5alpha-cholesta-8,14,24-trien-3beta-ol + formate + oxidized [NADPH--hemoprotein reductase] + H2O + 2 H(+). It catalyses the reaction 24,25-dihydrolanosterol + reduced [NADPH--hemoprotein reductase] + O2 = 32-hydroxy-24,25-dihydrolanosterol + oxidized [NADPH--hemoprotein reductase] + H2O + H(+). The enzyme catalyses 32-hydroxy-24,25-dihydrolanosterol + reduced [NADPH--hemoprotein reductase] + O2 = 32-oxo-24,25-dihydrolanosterol + oxidized [NADPH--hemoprotein reductase] + 2 H2O + H(+). The catalysed reaction is 32-oxo-24,25-dihydrolanosterol + reduced [NADPH--hemoprotein reductase] + O2 = 4,4-dimethyl-8,14-cholestadien-3beta-ol + formate + oxidized [NADPH--hemoprotein reductase] + H2O + 2 H(+). Its pathway is steroid biosynthesis; zymosterol biosynthesis; zymosterol from lanosterol: step 1/6. With respect to regulation, inhibited by azalanstat. Inhibited by azole antifungal agents ketoconazole, itraconazole and fluconazole. Sterol 14alpha-demethylase that plays a critical role in the cholesterol biosynthesis pathway, being cholesterol the major sterol component in mammalian membranes as well as a precursor for bile acid and steroid hormone synthesis. Cytochrome P450 monooxygenase that catalyzes the three-step oxidative removal of the 14alpha-methyl group (C-32) of sterols such as lanosterol (lanosta-8,24-dien-3beta-ol) and 24,25-dihydrolanosterol (DHL) in the form of formate, and converts the sterols to 4,4-dimethyl-5alpha-cholesta-8,14,24-trien-3beta-ol and 4,4-dimethyl-8,14-cholestadien-3beta-ol, respectively, which are intermediates of cholesterol biosynthesis. Can also demethylate substrates not intrinsic to mammals, such as eburicol (24-methylene-24,25-dihydrolanosterol), but at a lower rate than DHL. This chain is Lanosterol 14-alpha demethylase, found in Macaca fascicularis (Crab-eating macaque).